A 344-amino-acid chain; its full sequence is Fructose-bisphosphate aldolase (344 aa).

A D-glyceraldehyde 3-phosphate-binding site is contributed by Ser-53. Catalysis depends on Asp-95, which acts as the Proton donor. Zn(2+) contacts are provided by His-96, Asp-131, Glu-161, and His-212. Gly-213 is a binding site for dihydroxyacetone phosphate. Zn(2+) is bound at residue His-252. Dihydroxyacetone phosphate contacts are provided by residues 253 to 255 (GGS) and 274 to 277 (NVDT).

This sequence belongs to the class II fructose-bisphosphate aldolase family. Zn(2+) is required as a cofactor.

It carries out the reaction beta-D-fructose 1,6-bisphosphate = D-glyceraldehyde 3-phosphate + dihydroxyacetone phosphate. Its pathway is carbohydrate degradation; glycolysis; D-glyceraldehyde 3-phosphate and glycerone phosphate from D-glucose: step 4/4. Catalyzes the aldol condensation of dihydroxyacetone phosphate (DHAP or glycerone-phosphate) with glyceraldehyde 3-phosphate (G3P) to form fructose 1,6-bisphosphate (FBP) in gluconeogenesis and the reverse reaction in glycolysis. This is Fructose-bisphosphate aldolase (fba) from Corynebacterium glutamicum (strain ATCC 13032 / DSM 20300 / JCM 1318 / BCRC 11384 / CCUG 27702 / LMG 3730 / NBRC 12168 / NCIMB 10025 / NRRL B-2784 / 534).